An 837-amino-acid polypeptide reads, in one-letter code: A disintegrin and metalloproteinase with thrombospondin motifs 4 (837 aa).

Positions 1 to 51 (MSQTGSHPGRGLAGRWLWGAQPCLLLPIVPLSWLVWLLLLLLASLLPSARL) are cleaved as a signal peptide. Residues 52–212 (ASPLPREEEI…PSPRPRRAKR (161 aa)) constitute a propeptide that is removed on maturation. N-linked (GlcNAc...) asparagine glycosylation occurs at Asn-68. The segment at 166-191 (EGGTPNSAGGPGAHILRRKSPASGQG) is disordered. The Cysteine switch signature appears at 192–199 (PMCNVKAP). Cys-194 contributes to the Zn(2+) binding site. The 211-residue stretch at 218–428 (RFVETLVVAD…GYGHCLLDKP (211 aa)) folds into the Peptidase M12B domain. 11 disulfides stabilise this stretch: Cys-293–Cys-345, Cys-322–Cys-327, Cys-339–Cys-423, Cys-377–Cys-407, Cys-449–Cys-472, Cys-460–Cys-482, Cys-467–Cys-501, Cys-495–Cys-506, Cys-532–Cys-569, Cys-536–Cys-574, and Cys-547–Cys-559. His-361 serves as a coordination point for Zn(2+). Glu-362 is a catalytic residue. Positions 365 and 371 each coordinate Zn(2+). Residues 437-519 (TFPGKDYDAD…DQLQDFNIPQ (83 aa)) enclose the Disintegrin domain. A TSP type-1 domain is found at 520–575 (AGGWGPWGPWGDCSRTCGGGVQFSSRDCTRPVPRNGGKYCEGRRTRFRSCNTEDCP). The segment at 686 to 837 (SKQSGSFRKF…LRRRPWVGRK (152 aa)) is spacer.

In terms of assembly, interacts with SRPX2. Zn(2+) serves as cofactor. The precursor is cleaved by a furin endopeptidase. Post-translationally, glycosylated. Can be O-fucosylated by POFUT2 on a serine or a threonine residue found within the consensus sequence C1-X(2)-(S/T)-C2-G of the TSP type-1 repeat domains where C1 and C2 are the first and second cysteine residue of the repeat, respectively. Fucosylated repeats can then be further glycosylated by the addition of a beta-1,3-glucose residue by the glucosyltransferase, B3GALTL. Fucosylation mediates the efficient secretion of ADAMTS family members. Can also be C-glycosylated with one or two mannose molecules on tryptophan residues within the consensus sequence W-X-X-W of the TPRs, and N-glycosylated. These other glycosylations can also facilitate secretion.

The protein localises to the secreted. It is found in the extracellular space. The protein resides in the extracellular matrix. It catalyses the reaction Glutamyl endopeptidase. Bonds cleaved include 370-Thr-Glu-Gly-Glu-|-Ala-Arg-Gly-Ser-377 in the interglobular domain of mammalian aggrecan.. In terms of biological role, cleaves aggrecan, a cartilage proteoglycan, at the '392-Glu-|-Ala-393' site and may be involved in its turnover. Also cleaves COMP. May play an important role in the destruction of aggrecan in arthritic diseases. The polypeptide is A disintegrin and metalloproteinase with thrombospondin motifs 4 (ADAMTS4) (Pongo abelii (Sumatran orangutan)).